Here is a 357-residue protein sequence, read N- to C-terminus: Multiple sugar-binding periplasmic protein SbpA (357 aa).

The signal sequence occupies residues 1-20 (MSSSFTTTLAGMAVGMLVLA).

This sequence belongs to the bacterial solute-binding protein 2 family.

Its subcellular location is the periplasm. In terms of biological role, mediates chemotaxis towards D-galactose, L-arabinose and D-fucose but not towards D-fructose. Probably part of a binding-protein high affinity uptake system. The polypeptide is Multiple sugar-binding periplasmic protein SbpA (sbpA) (Azospirillum brasilense).